The sequence spans 232 residues: Urease accessory protein UreF (232 aa).

This sequence belongs to the UreF family. UreD, UreF and UreG form a complex that acts as a GTP-hydrolysis-dependent molecular chaperone, activating the urease apoprotein by helping to assemble the nickel containing metallocenter of UreC. The UreE protein probably delivers the nickel.

The protein localises to the cytoplasm. Its function is as follows. Required for maturation of urease via the functional incorporation of the urease nickel metallocenter. The sequence is that of Urease accessory protein UreF from Azorhizobium caulinodans (strain ATCC 43989 / DSM 5975 / JCM 20966 / LMG 6465 / NBRC 14845 / NCIMB 13405 / ORS 571).